A 109-amino-acid chain; its full sequence is Sperm-specific class P protein 16 (109 aa).

An MSP domain is found at 2–109 (SLTADPPACT…TVTIPMSATA (108 aa)).

Expressed at higher level in testis.

This is Sperm-specific class P protein 16 (ssp-16) from Caenorhabditis elegans.